The chain runs to 336 residues: Holliday junction branch migration complex subunit RuvB (336 aa).

Residues 4–184 (ADRLISAASN…FGIVQRLEFY (181 aa)) are large ATPase domain (RuvB-L). ATP is bound by residues Ile23, Arg24, Gly65, Lys68, Thr69, Thr70, 131-133 (EDY), Arg174, Tyr184, and Arg221. Thr69 lines the Mg(2+) pocket. A small ATPAse domain (RuvB-S) region spans residues 185–255 (QVPDLQYIVG…VAAQALDMLN (71 aa)). The head domain (RuvB-H) stretch occupies residues 258 to 336 (AEGFDYMDRK…HFGITPPEMP (79 aa)). Residues Arg294, Arg313, and Arg318 each coordinate DNA.

It belongs to the RuvB family. In terms of assembly, homohexamer. Forms an RuvA(8)-RuvB(12)-Holliday junction (HJ) complex. HJ DNA is sandwiched between 2 RuvA tetramers; dsDNA enters through RuvA and exits via RuvB. An RuvB hexamer assembles on each DNA strand where it exits the tetramer. Each RuvB hexamer is contacted by two RuvA subunits (via domain III) on 2 adjacent RuvB subunits; this complex drives branch migration. In the full resolvosome a probable DNA-RuvA(4)-RuvB(12)-RuvC(2) complex forms which resolves the HJ.

The protein localises to the cytoplasm. It catalyses the reaction ATP + H2O = ADP + phosphate + H(+). The RuvA-RuvB-RuvC complex processes Holliday junction (HJ) DNA during genetic recombination and DNA repair, while the RuvA-RuvB complex plays an important role in the rescue of blocked DNA replication forks via replication fork reversal (RFR). RuvA specifically binds to HJ cruciform DNA, conferring on it an open structure. The RuvB hexamer acts as an ATP-dependent pump, pulling dsDNA into and through the RuvAB complex. RuvB forms 2 homohexamers on either side of HJ DNA bound by 1 or 2 RuvA tetramers; 4 subunits per hexamer contact DNA at a time. Coordinated motions by a converter formed by DNA-disengaged RuvB subunits stimulates ATP hydrolysis and nucleotide exchange. Immobilization of the converter enables RuvB to convert the ATP-contained energy into a lever motion, pulling 2 nucleotides of DNA out of the RuvA tetramer per ATP hydrolyzed, thus driving DNA branch migration. The RuvB motors rotate together with the DNA substrate, which together with the progressing nucleotide cycle form the mechanistic basis for DNA recombination by continuous HJ branch migration. Branch migration allows RuvC to scan DNA until it finds its consensus sequence, where it cleaves and resolves cruciform DNA. This chain is Holliday junction branch migration complex subunit RuvB, found in Enterobacter sp. (strain 638).